We begin with the raw amino-acid sequence, 478 residues long: Putative L-amino-acid oxidase YobN (478 aa).

Residues S34, E53, R61, and 80–81 (MR) contribute to the FAD site. 2 residues coordinate substrate: R81 and Y369. Residues E451 and 460-463 (MQGA) contribute to the FAD site.

This sequence belongs to the flavin monoamine oxidase family. FIG1 subfamily. Requires FAD as cofactor.

It carries out the reaction an L-alpha-amino acid + O2 + H2O = a 2-oxocarboxylate + H2O2 + NH4(+). The chain is Putative L-amino-acid oxidase YobN (yobN) from Bacillus subtilis (strain 168).